Here is a 127-residue protein sequence, read N- to C-terminus: Small ribosomal subunit protein uS11 (127 aa).

Belongs to the universal ribosomal protein uS11 family. As to quaternary structure, part of the 30S ribosomal subunit. Interacts with proteins S7 and S18. Binds to IF-3.

Functionally, located on the platform of the 30S subunit, it bridges several disparate RNA helices of the 16S rRNA. Forms part of the Shine-Dalgarno cleft in the 70S ribosome. In Chlorobaculum parvum (strain DSM 263 / NCIMB 8327) (Chlorobium vibrioforme subsp. thiosulfatophilum), this protein is Small ribosomal subunit protein uS11.